The sequence spans 652 residues: Nitrate reductase-like protein NarX (652 aa).

A nitrate reductase alpha subunit region spans residues 1 to 251; that stretch reads MTVTPRTGSR…FGDQTDVPES (251 aa). One can recognise a 4Fe-4S Mo/W bis-MGD-type domain in the interval 53-117; it reads DKVVRSTHGV…AFSWYTYSPT (65 aa). [4Fe-4S] cluster is bound by residues His-60, Cys-64, Cys-68, and Cys-103. Asp-233 contributes to the Mo-bis(molybdopterin guanine dinucleotide) binding site. The tract at residues 258–415 is nitrate reductase delta subunit; it reads VWQCASVLLT…TVAAVCRTGD (158 aa). Helical transmembrane passes span 416–436, 466–486, 504–524, 545–565, and 595–615; these read MMGE…VAVG, PMFH…LVIP, AVVL…LLIY, LVLV…SGVV, and APLY…LWPF. The interval 416–652 is nitrate reductase gamma subunit; the sequence is MMGELFWTVV…VLTRPRRRGW (237 aa). Heme b contacts are provided by His-469 and His-479. Residues His-602 and His-620 each coordinate heme b.

It in the N-terminal section; belongs to the nitrate reductase alpha subunit family. This sequence in the central section; belongs to the NarJ/NarW family. In the C-terminal section; belongs to the nitrate reductase gamma subunit family. [4Fe-4S] cluster is required as a cofactor. It depends on Mo-bis(molybdopterin guanine dinucleotide) as a cofactor. Requires heme b as cofactor.

The protein localises to the cell membrane. In terms of biological role, does not seem to have nitrate reductase activity. The protein is Nitrate reductase-like protein NarX (narX) of Mycobacterium tuberculosis (strain CDC 1551 / Oshkosh).